The chain runs to 334 residues: GTPase Obg (334 aa).

The Obg domain maps to 1–159 (MKFVDSASVR…REIGLELSVM (159 aa)). In terms of domain architecture, OBG-type G spans 160 to 332 (ADIGLLGIPN…LVAGLFKLVL (173 aa)). Residues 166-173 (GIPNAGKS), 191-195 (FTTLH), 212-215 (DIPG), 282-285 (NKID), and 313-315 (SAL) contribute to the GTP site. Residues S173 and T193 each contribute to the Mg(2+) site.

The protein belongs to the TRAFAC class OBG-HflX-like GTPase superfamily. OBG GTPase family. Monomer. The cofactor is Mg(2+).

The protein localises to the cytoplasm. Its function is as follows. An essential GTPase which binds GTP, GDP and possibly (p)ppGpp with moderate affinity, with high nucleotide exchange rates and a fairly low GTP hydrolysis rate. Plays a role in control of the cell cycle, stress response, ribosome biogenesis and in those bacteria that undergo differentiation, in morphogenesis control. In Vesicomyosocius okutanii subsp. Calyptogena okutanii (strain HA), this protein is GTPase Obg.